Consider the following 155-residue polypeptide: MPEAGAIRPDATVLGFDVGSRRIGVAVGTALGAGARAVAVINVHANGPDWVALDRVHKEWRPAGLVVGDPLTLDDKDQPARKRAHAFARELRERYALPVVLIDERSSSVEAAQRFARERADGRKRRRDADTLDAMAAAVIVERWLSAPEQATLLP.

The protein belongs to the YqgF nuclease family.

Its subcellular location is the cytoplasm. In terms of biological role, could be a nuclease involved in processing of the 5'-end of pre-16S rRNA. The protein is Putative pre-16S rRNA nuclease of Xanthomonas campestris pv. campestris (strain 8004).